Here is a 620-residue protein sequence, read N- to C-terminus: 1-deoxy-D-xylulose-5-phosphate synthase (620 aa).

Thiamine diphosphate is bound by residues H80 and 121–123 (GHS). Residue D152 participates in Mg(2+) binding. Residues 153–154 (GA), N181, Y288, and E370 each bind thiamine diphosphate. N181 serves as a coordination point for Mg(2+).

This sequence belongs to the transketolase family. DXPS subfamily. As to quaternary structure, homodimer. Mg(2+) serves as cofactor. It depends on thiamine diphosphate as a cofactor.

It carries out the reaction D-glyceraldehyde 3-phosphate + pyruvate + H(+) = 1-deoxy-D-xylulose 5-phosphate + CO2. Its pathway is metabolic intermediate biosynthesis; 1-deoxy-D-xylulose 5-phosphate biosynthesis; 1-deoxy-D-xylulose 5-phosphate from D-glyceraldehyde 3-phosphate and pyruvate: step 1/1. Its function is as follows. Catalyzes the acyloin condensation reaction between C atoms 2 and 3 of pyruvate and glyceraldehyde 3-phosphate to yield 1-deoxy-D-xylulose-5-phosphate (DXP). The chain is 1-deoxy-D-xylulose-5-phosphate synthase from Salmonella typhi.